A 277-amino-acid polypeptide reads, in one-letter code: Basic leucine zipper transcriptional factor ATF-like 2 (277 aa).

Disordered regions lie at residues 15 to 50 (LGES…HQQH), 126 to 146 (FQTP…CSHE), and 191 to 256 (SFSK…QKSS). Positions 18-81 (SQKQLKKKQK…AGWGRTLHLH (64 aa)) constitute a bZIP domain. The interval 20–42 (KQLKKKQKNRVAAQRSRQKHTSK) is basic motif. Residues 41–50 (SKADALHQQH) are compositionally biased toward basic and acidic residues. Positions 46 to 67 (LHQQHESLEKQNHALRKEIQAL) are leucine-zipper. 2 stretches are compositionally biased toward polar residues: residues 213–227 (RQEQ…SSDS) and 247–256 (GSSTHWQKSS).

It belongs to the bZIP family. Heterodimer; heterodimerizes with JUN family proteins.

The protein localises to the nucleus. Its function is as follows. AP-1 family transcription factor that controls the differentiation of lineage-specific cells in the immune system. Selectively suppresses CCN1 transcription and hence blocks the downstream cell proliferation signals produced by CCN1 and inhibits CCN1-induced anchorage-independent growth and invasion in several cancer types. Possibly acts by interfering with AP-1 binding to CCN1 promoter. Following infection, participates in the differentiation of CD8(+) thymic conventional dendritic cells in the immune system. Acts via the formation of a heterodimer with JUN family proteins that recognizes and binds DNA sequence 5'-TGA[CG]TCA-3' and regulates expression of target genes. This is Basic leucine zipper transcriptional factor ATF-like 2 (Batf2) from Mus musculus (Mouse).